A 132-amino-acid chain; its full sequence is Small ribosomal subunit protein uS8 (132 aa).

It belongs to the universal ribosomal protein uS8 family. As to quaternary structure, part of the 30S ribosomal subunit. Contacts proteins S5 and S12.

Its function is as follows. One of the primary rRNA binding proteins, it binds directly to 16S rRNA central domain where it helps coordinate assembly of the platform of the 30S subunit. The chain is Small ribosomal subunit protein uS8 from Anaplasma marginale (strain Florida).